The following is a 551-amino-acid chain: Palatinase (551 aa).

Residue Asp-201 is the Nucleophile of the active site. Glu-243 acts as the Proton donor in catalysis.

Belongs to the glycosyl hydrolase 13 family.

It carries out the reaction 6-O-alpha-D-glucopyranosyl-D-fructose + H2O = alpha-D-glucose + D-fructose. Its pathway is glycan degradation; palatinose degradation. In terms of biological role, catalyzes the hydrolysis of palatinose. Shows a strict specificity toward palatinose, and cannot release glucose from the disaccharides sucrose, maltose, trehalose and melibiose. Involved in the degradation of palatinose, a sucrose isomer that is formed as a reserve material under conditions of excess carbon availability, sequestered in a form unavailable to competitors such as fungi or the host plant, and whose consumption appears to be postponed until the preferentially metabolized carbon source (e.g. sucrose) is depleted. In Erwinia rhapontici (Pectobacterium rhapontici), this protein is Palatinase.